Here is a 631-residue protein sequence, read N- to C-terminus: Probable potassium transport system protein Kup (631 aa).

The next 12 membrane-spanning stretches (helical) occupy residues 17-37 (IGLLIAAVGVVYGDIGTSPLY), 56-76 (ILGVLSLIFWSLIWVVSFKYM), 109-129 (MMMVVFGLFGAALFYGDSMIT), 147-167 (GLDHWIVPMALIVLVGLFLIQ), 174-194 (IGVLFGPVMVTWFLVLGALGV), 215-235 (FFIIHPGIGVAILGAVVLALT), 256-276 (WFILVLPALLLNYFGQGALVL), 288-308 (LLAPGWALLPLIGLSTMATII), 346-366 (IYIGAVNWALMAGVILLVIGF), 378-398 (VAVTGTMLCTTILVSTVMLML), 403-423 (PLLAVPLLICLLLVDGLFFAA), and 428-448 (IFQGGAFPVLAGAVLFILMTT).

Belongs to the HAK/KUP transporter (TC 2.A.72) family.

The protein resides in the cell inner membrane. It carries out the reaction K(+)(in) + H(+)(in) = K(+)(out) + H(+)(out). In terms of biological role, transport of potassium into the cell. Likely operates as a K(+):H(+) symporter. This is Probable potassium transport system protein Kup from Pseudomonas savastanoi pv. phaseolicola (strain 1448A / Race 6) (Pseudomonas syringae pv. phaseolicola (strain 1448A / Race 6)).